The primary structure comprises 285 residues: HTH-type transcriptional regulator MurR (285 aa).

The HTH rpiR-type domain maps to 1–77 (MLYLTKIRNA…MALIGEYSAS (77 aa)). A DNA-binding region (H-T-H motif) is located at residues 37-56 (SRKMAKQLGISQSSIVKFAQ). An SIS domain is found at 128-268 (IIEVISKAPF…FVGLVQLNDV (141 aa)).

In terms of assembly, homotetramer.

It functions in the pathway amino-sugar metabolism; N-acetylmuramate degradation [regulation]. Its function is as follows. Represses the expression of the murPQ operon involved in the uptake and degradation of N-acetylmuramic acid (MurNAc). Binds to two adjacent inverted repeats within the operator region. MurNAc 6-phosphate, the substrate of MurQ, is the specific inducer that weakens binding of MurR to the operator. The sequence is that of HTH-type transcriptional regulator MurR from Escherichia coli O7:K1 (strain IAI39 / ExPEC).